The following is a 362-amino-acid chain: Aminomethyltransferase (362 aa).

Belongs to the GcvT family. As to quaternary structure, the glycine cleavage system is composed of four proteins: P, T, L and H.

The catalysed reaction is N(6)-[(R)-S(8)-aminomethyldihydrolipoyl]-L-lysyl-[protein] + (6S)-5,6,7,8-tetrahydrofolate = N(6)-[(R)-dihydrolipoyl]-L-lysyl-[protein] + (6R)-5,10-methylene-5,6,7,8-tetrahydrofolate + NH4(+). The glycine cleavage system catalyzes the degradation of glycine. This is Aminomethyltransferase from Pseudothermotoga lettingae (strain ATCC BAA-301 / DSM 14385 / NBRC 107922 / TMO) (Thermotoga lettingae).